We begin with the raw amino-acid sequence, 297 residues long: Nucleotide-binding protein DSY4845 (297 aa).

13 to 20 provides a ligand contact to ATP; sequence GLSGAGKT. 64-67 is a GTP binding site; that stretch reads DLRG.

This sequence belongs to the RapZ-like family.

Its function is as follows. Displays ATPase and GTPase activities. In Desulfitobacterium hafniense (strain Y51), this protein is Nucleotide-binding protein DSY4845.